The primary structure comprises 733 residues: EF-hand domain-containing family member C2 (733 aa).

DM10 domains follow at residues 61–168 (DKQV…TKIG), 212–354 (DRKV…RTKY), and 416–523 (ISNT…ERNS).

As to quaternary structure, microtubule inner protein component of sperm flagellar doublet microtubules. As to expression, expressed in trachea multiciliated cells.

It is found in the cytoplasm. Its subcellular location is the cytoskeleton. It localises to the cilium axoneme. The protein localises to the flagellum axoneme. Its function is as follows. Microtubule inner protein (MIP) part of the dynein-decorated doublet microtubules (DMTs) in cilia axoneme, which is required for motile cilia beating. This Bos taurus (Bovine) protein is EF-hand domain-containing family member C2 (EFHC2).